Consider the following 136-residue polypeptide: Large ribosomal subunit protein eL27 (136 aa).

A KOW domain is found at 5–40; sequence MKPGKVVMVLAGRYAGRKAVIVKNIDDGTADRPYSH.

The protein belongs to the eukaryotic ribosomal protein eL27 family. Component of the large ribosomal subunit.

Its subcellular location is the cytoplasm. It localises to the cytosol. It is found in the rough endoplasmic reticulum. In terms of biological role, component of the large ribosomal subunit. This Danio rerio (Zebrafish) protein is Large ribosomal subunit protein eL27 (rpl27).